The following is a 155-amino-acid chain: Gene 5 protein (155 aa).

Residues 1–24 (MGTRGPIGKRDEERVRRNTPENPT) form a disordered region. Residues 8–19 (GKRDEERVRRNT) show a composition bias toward basic and acidic residues.

This is Gene 5 protein (5) from Mycobacterium (Mycobacteriophage D29).